The sequence spans 70 residues: Large ribosomal subunit protein bL31 (70 aa).

4 residues coordinate Zn(2+): cysteine 16, cysteine 18, cysteine 37, and cysteine 40.

The protein belongs to the bacterial ribosomal protein bL31 family. Type A subfamily. Part of the 50S ribosomal subunit. It depends on Zn(2+) as a cofactor.

In terms of biological role, binds the 23S rRNA. This Shewanella woodyi (strain ATCC 51908 / MS32) protein is Large ribosomal subunit protein bL31.